Consider the following 456-residue polypeptide: tRNA-2-methylthio-N(6)-dimethylallyladenosine synthase (456 aa).

The region spanning 18–134 (KKLFIETYGC…LPDLVASVEA (117 aa)) is the MTTase N-terminal domain. [4Fe-4S] cluster is bound by residues cysteine 27, cysteine 63, cysteine 98, cysteine 172, cysteine 176, and cysteine 179. The Radical SAM core domain maps to 158–390 (CGNHISGFVS…IELQNRLSAE (233 aa)). The 64-residue stretch at 393 to 456 (ARDVGKTFEV…SATLKGEEVF (64 aa)) folds into the TRAM domain.

This sequence belongs to the methylthiotransferase family. MiaB subfamily. Monomer. The cofactor is [4Fe-4S] cluster.

Its subcellular location is the cytoplasm. It carries out the reaction N(6)-dimethylallyladenosine(37) in tRNA + (sulfur carrier)-SH + AH2 + 2 S-adenosyl-L-methionine = 2-methylsulfanyl-N(6)-dimethylallyladenosine(37) in tRNA + (sulfur carrier)-H + 5'-deoxyadenosine + L-methionine + A + S-adenosyl-L-homocysteine + 2 H(+). In terms of biological role, catalyzes the methylthiolation of N6-(dimethylallyl)adenosine (i(6)A), leading to the formation of 2-methylthio-N6-(dimethylallyl)adenosine (ms(2)i(6)A) at position 37 in tRNAs that read codons beginning with uridine. The polypeptide is tRNA-2-methylthio-N(6)-dimethylallyladenosine synthase (Phocaeicola vulgatus (strain ATCC 8482 / DSM 1447 / JCM 5826 / CCUG 4940 / NBRC 14291 / NCTC 11154) (Bacteroides vulgatus)).